The primary structure comprises 39 residues: Adipokinetic prohormone type 2 (39 aa).

Position 1 is a pyrrolidone carboxylic acid (Gln-1). At Trp-8 the chain carries Tryptophan amide.

The protein belongs to the AKH/HRTH/RPCH family. Adipokinetic hormone precursor-related peptide (APRP) can form three type of disulfide-bond dimers: p1 (alpha-alpha), p2 (alpha-beta), and p3 (beta-beta).

It localises to the secreted. Its function is as follows. This hormone, released from cells in the corpora cardiaca, causes release of diglycerides from the fat body and stimulation of muscles to use these diglycerides as an energy source during energy-demanding processes. The protein is Adipokinetic prohormone type 2 of Schistocerca gregaria (Desert locust).